Consider the following 61-residue polypeptide: Large ribosomal subunit protein bL32 (61 aa).

The disordered stretch occupies residues 1–44; that stretch reads MAVQQNRKSRSRRDMRRSHDALTENALTVDQATGETHRRHHVTK. Over residues 7–16 the composition is skewed to basic residues; the sequence is RKSRSRRDMR. Residues 25-34 are compositionally biased toward polar residues; it reads NALTVDQATG.

It belongs to the bacterial ribosomal protein bL32 family.

This is Large ribosomal subunit protein bL32 from Acinetobacter baumannii (strain AB307-0294).